The primary structure comprises 1037 residues: Importin-8 (1037 aa).

Residues 22–102 form the Importin N-terminal domain; it reads AENELNQSYK…RDNIVEGIIR (81 aa). The span at 886–895 shows a compositional bias: basic and acidic residues; that stretch reads DRSKAEKADM. The disordered stretch occupies residues 886–934; it reads DRSKAEKADMEENEEISSDEEETNVTAQAMQSNNGRGEDEEEEDDDWDE. The segment covering 896-908 has biased composition (acidic residues); the sequence is EENEEISSDEEET. Phosphoserine is present on residues serine 902 and serine 903. The segment covering 909–920 has biased composition (polar residues); sequence NVTAQAMQSNNG. The segment covering 923–934 has biased composition (acidic residues); it reads EDEEEEDDDWDE.

Belongs to the importin beta family. As to quaternary structure, forms a heterodimer with KPNB1. Interacts with SRP19. Interacts with RPL23A. Binds directly to nuclear pore complexes. Interacts with LRPPRC; the interaction occurs when LRPPRC is in its RNA-free form and promotes import of LRPPRC to the nucleus to allow for EIF4E-mediated export of mRNAS from the nucleus to the cytoplasm.

It localises to the cytoplasm. It is found in the nucleus. Involved in nuclear protein import, either by acting as autonomous nuclear transport receptor or as an adapter-like protein in association with the importin-beta subunit KPNB1. Acting autonomously, may serve as receptor for nuclear localization signals (NLS) and promote translocation of import substrates through the nuclear pore complex (NPC) by an energy requiring, Ran-dependent mechanism. At the nucleoplasmic side of the NPC, Ran binds to importin, the importin/substrate complex dissociates and importin is re-exported from the nucleus to the cytoplasm where GTP hydrolysis releases Ran. The directionality of nuclear import is thought to be conferred by an asymmetric distribution of the GTP- and GDP-bound forms of Ran between the cytoplasm and nucleus. In vitro mediates the nuclear import of the signal recognition particle protein SRP19. May also be involved in cytoplasm-to-nucleus shuttling of a broad spectrum of other cargos, including Argonaute-microRNAs complexes, the JUN protein, RELA/NF-kappa-B p65 subunit, the translation initiation factor EIF4E and a set of receptor-activated mothers against decapentaplegic homolog (SMAD) transcription factors that play a critical role downstream of the large family of transforming growth factor beta and bone morphogenetic protein (BMP) cytokines. The sequence is that of Importin-8 (IPO8) from Homo sapiens (Human).